The sequence spans 1597 residues: Glucosyltransferase-I (1597 aa).

The first 38 residues, methionine 1–alanine 38, serve as a signal peptide directing secretion. Residues leucine 52 to lysine 120 are disordered. Positions threonine 53–threonine 114 are enriched in low complexity. Cell wall-binding repeat units lie at residues methionine 157–valine 176 and lysine 178–tyrosine 197. The interval threonine 200–valine 1050 is catalytic; approximate. 22 Cell wall-binding repeats span residues threonine 1089 to methionine 1108, valine 1109 to alanine 1128, arginine 1130 to arginine 1150, glutamate 1152 to alanine 1172, leucine 1173 to glutamine 1191, lysine 1193 to alanine 1214, threonine 1216 to alanine 1236, valine 1237 to glutamine 1256, lysine 1258 to methionine 1279, threonine 1281 to alanine 1301, valine 1302 to glutamine 1321, lysine 1323 to glutamate 1343, glutamine 1344 to alanine 1365, glutamine 1366 to serine 1380, leucine 1415 to glutamine 1434, lysine 1436 to glutamine 1457, phenylalanine 1459 to alanine 1478, lysine 1485 to tyrosine 1505, glycine 1508 to valine 1527, leucine 1528 to glutamine 1547, lysine 1549 to methionine 1570, and threonine 1572 to alanine 1591. A glucan-binding; approximate region spans residues leucine 1099–asparagine 1597.

Belongs to the glycosyl hydrolase 70 family.

Its subcellular location is the secreted. The enzyme catalyses [(1-&gt;6)-alpha-D-glucosyl](n) + sucrose = [(1-&gt;6)-alpha-D-glucosyl](n+1) + D-fructose. Its function is as follows. Production of extracellular glucans, that are thought to play a key role in the development of the dental plaque because of their ability to adhere to smooth surfaces and mediate the aggregation of bacterial cells and food debris. The protein is Glucosyltransferase-I (gtfI) of Streptococcus downei (Streptococcus sobrinus).